Consider the following 66-residue polypeptide: Large ribosomal subunit protein bL32 (66 aa).

The segment at 1-20 (MAVPKRRKSKSKVRTKRAHH) is disordered.

This sequence belongs to the bacterial ribosomal protein bL32 family.

This chain is Large ribosomal subunit protein bL32, found in Leptospira borgpetersenii serovar Hardjo-bovis (strain JB197).